The sequence spans 407 residues: Transcriptional regulator UL34 (407 aa).

2 disordered regions span residues 267 to 330 (AAAG…EELF) and 388 to 407 (SPSV…PLCI). Acidic residues predominate over residues 273–286 (EADENNDEGEEDDD). Residues 287–301 (ELRHSDPAPLHESKK) are compositionally biased toward basic and acidic residues. Residues 302-312 (PRNARRPRTRV) show a composition bias toward basic residues.

Belongs to the HHV-5 UL34 protein family.

It localises to the host nucleus. Acts as a transcriptional repressor of the US3 gene expression through a specific DNA sequence named the transcriptional repressive element (tre). This chain is Transcriptional regulator UL34 (UL34), found in Human cytomegalovirus (strain AD169) (HHV-5).